Consider the following 621-residue polypeptide: Probable serine/threonine-protein kinase WNK2 (621 aa).

Residues 28–286 (GRYTEVLGKG…AQELLMDPFL (259 aa)) enclose the Protein kinase domain. Residues 108-111 (TEVF) and K158 each bind ATP. Residue D175 is the Proton acceptor of the active site. 4 disordered regions span residues 438-490 (SVEN…SDSP), 501-520 (VEPH…NDTD), 527-553 (GTSV…SPQS), and 600-621 (HREE…SDKP).

It belongs to the protein kinase superfamily. Ser/Thr protein kinase family. WNK subfamily.

It catalyses the reaction L-seryl-[protein] + ATP = O-phospho-L-seryl-[protein] + ADP + H(+). The enzyme catalyses L-threonyl-[protein] + ATP = O-phospho-L-threonyl-[protein] + ADP + H(+). The chain is Probable serine/threonine-protein kinase WNK2 (WNK2) from Oryza sativa subsp. japonica (Rice).